We begin with the raw amino-acid sequence, 131 residues long: Translation initiation factor 5A (131 aa).

Lys36 is modified (hypusine).

This sequence belongs to the eIF-5A family. The N-terminus is blocked.

It localises to the cytoplasm. Functions by promoting the formation of the first peptide bond. In Sulfolobus acidocaldarius (strain ATCC 33909 / DSM 639 / JCM 8929 / NBRC 15157 / NCIMB 11770), this protein is Translation initiation factor 5A (eif5a).